Reading from the N-terminus, the 61-residue chain is Metallothionein-2 (61 aa).

N-acetylmethionine is present on M1. The beta stretch occupies residues 1–29 (MDPNCSCVAGDSCTCAGSCKCKECKCTSC). A divalent metal cation contacts are provided by C5, C7, C13, C15, C19, C21, C24, C26, C29, C33, C34, C36, C37, C41, C44, C48, C50, C57, C59, and C60. Positions 20-25 (KCKECK) are antigenic epitope. An alpha region spans residues 30-61 (KKSCCSCCPVGCAKCAQGCICKGASDKCNCCA).

Belongs to the metallothionein superfamily. Type 1 family.

In terms of biological role, metallothioneins have a high content of cysteine residues that bind various heavy metals; these proteins are transcriptionally regulated by both heavy metals and glucocorticoids. This chain is Metallothionein-2 (MT2), found in Macaca fascicularis (Crab-eating macaque).